We begin with the raw amino-acid sequence, 202 residues long: UPF0316 protein SH1041 (202 aa).

The next 3 helical transmembrane spans lie at 8-28, 40-60, and 66-86; these read PWSM…FLTM, MAAA…GMVM, and IQNI…GMKI.

Belongs to the UPF0316 family.

The protein localises to the cell membrane. The chain is UPF0316 protein SH1041 from Staphylococcus haemolyticus (strain JCSC1435).